The chain runs to 476 residues: ATP synthase subunit beta, mitochondrial (476 aa).

Gly156–Val163 serves as a coordination point for ATP.

F-type ATP synthases have 2 components, the catalytic core F(1) and the membrane-embedded component F(0), linked together by a central stalk and a peripheral stalk. The central stalk, also called rotor shaft, is often seen as part of F(1). The peripheral stalk is seen as part of F(0). F(0) contains the membrane channel next to the rotor. F-type ATP synthases form dimers but each monomer functions independently in ATP generation. The dimer consists of 18 different polypeptides: ATP1 (subunit alpha, part of F(1), 3 molecules per monomer), ATP2 (subunit beta, part of F(1), 3 molecules per monomer), ATP3 (subunit gamma, part of the central stalk), ATP4 (subunit b, part of the peripheral stalk), ATP5/OSCP (subunit 5/OSCP, part of the peripheral stalk), ATP6 (subunit a, part of the peripheral stalk), ATP7 (subunit d, part of the peripheral stalk), ATP8 (subunit 8, part of the peripheral stalk), OLI1 (subunit c, part of the rotor, 10 molecules per monomer), ATP14 (subunit h, part of the peripheral stalk), ATP15 (subunit epsilon, part of the central stalk), ATP16 (subunit delta, part of the central stalk), ATP17 (subunit f, part of the peripheral stalk), ATP18 (subunit i/j, part of the peripheral stalk). Dimer-specific subunits are ATP19 (subunit k, at interface between monomers), ATP20 (subunit g, at interface between monomers), TIM11 (subunit e, at interface between monomers). Also contains subunit L.

It localises to the mitochondrion inner membrane. The catalysed reaction is ATP + H2O + 4 H(+)(in) = ADP + phosphate + 5 H(+)(out). Mitochondrial membrane ATP synthase (F(1)F(0) ATP synthase or Complex V) produces ATP from ADP in the presence of a proton gradient across the membrane which is generated by electron transport complexes of the respiratory chain. F-type ATP synthases consist of two structural domains, F(1) - containing the extramembraneous catalytic core, and F(0) - containing the membrane proton channel, linked together by a central stalk and a peripheral stalk. During catalysis, ATP synthesis in the catalytic domain of F(1) is coupled via a rotary mechanism of the central stalk subunits to proton translocation. Subunits alpha/ATP1 and beta/ATP2 form the catalytic core in F(1). Rotation of the central stalk against the surrounding alpha/ATP1(3)beta/ATP2(3) subunits leads to hydrolysis of ATP in three separate catalytic sites on the beta/ATP2 subunits. In Pichia angusta (Yeast), this protein is ATP synthase subunit beta, mitochondrial.